Here is a 396-residue protein sequence, read N- to C-terminus: Protein ANTAGONIST OF LIKE HETEROCHROMATIN PROTEIN 1 (396 aa).

2 stretches are compositionally biased toward basic residues: residues 1–12 (MAPVKQKKKNKK) and 20–29 (KLAKNKEKKR). Residues 1 to 29 (MAPVKQKKKNKKKPLDKAKKLAKNKEKKR) are disordered. Residues 6-13 (QKKKNKKK) carry the Nuclear localization signal motif. Residues 183–348 (IDTTHIIMTL…IILVCCLLHN (166 aa)) enclose the DDE Tnp4 domain.

It belongs to the HARBI1 family. As to quaternary structure, interacts with core components of POLYCOMB REPRESSIVE COMPLEX 2 (PRC2), a PcG protein complex with H3K27me3 histone methyltransferase activity. Associates with plant-specific PRC2 accessory components such as MSI1, EMF2, VRN2, FIE and CLF. A divalent metal cation serves as cofactor. As to expression, expressed in roots, inflorescence stems, seedlings, leaves, flower buds, inflorescences, and siliques.

The protein resides in the nucleus. Transposase-derived protein that may have nuclease activity. Antagonist of polycomb-group (PcG) protein-mediated chromatin silencing, probably by preventing the association of POLYCOMB REPRESSIVE COMPLEX 2 (PRC2) with its accessory components. Needed for full reactivation of several floral homeotic genes that are repressed by PcG. The polypeptide is Protein ANTAGONIST OF LIKE HETEROCHROMATIN PROTEIN 1 (Arabidopsis thaliana (Mouse-ear cress)).